The chain runs to 88 residues: Putative membrane protein insertion efficiency factor (88 aa).

The tract at residues 66–88 is disordered; sequence DFVPPKKDKNADSEHSCKAHHHH. Positions 69-82 are enriched in basic and acidic residues; the sequence is PPKKDKNADSEHSC.

This sequence belongs to the UPF0161 family.

It localises to the cell membrane. Could be involved in insertion of integral membrane proteins into the membrane. This is Putative membrane protein insertion efficiency factor from Listeria monocytogenes serotype 4a (strain HCC23).